A 32-amino-acid polypeptide reads, in one-letter code: Cytochrome b6-f complex subunit 8 (32 aa).

Residues 6 to 26 (IVSLAWAALMVVFTFSLSLVV) traverse the membrane as a helical segment.

The protein belongs to the PetN family. As to quaternary structure, the 4 large subunits of the cytochrome b6-f complex are cytochrome b6, subunit IV (17 kDa polypeptide, PetD), cytochrome f and the Rieske protein, while the 4 small subunits are PetG, PetL, PetM and PetN. The complex functions as a dimer.

Its subcellular location is the plastid. It localises to the chloroplast thylakoid membrane. Functionally, component of the cytochrome b6-f complex, which mediates electron transfer between photosystem II (PSII) and photosystem I (PSI), cyclic electron flow around PSI, and state transitions. The polypeptide is Cytochrome b6-f complex subunit 8 (Illicium oligandrum (Star anise)).